Here is a 149-residue protein sequence, read N- to C-terminus: Large ribosomal subunit protein uL22c (149 aa).

Belongs to the universal ribosomal protein uL22 family. Part of the 50S ribosomal subunit.

Its subcellular location is the plastid. The protein resides in the chloroplast. In terms of biological role, this protein binds specifically to 23S rRNA. Functionally, the globular domain of the protein is located near the polypeptide exit tunnel on the outside of the subunit, while an extended beta-hairpin is found that lines the wall of the exit tunnel in the center of the 70S ribosome. The protein is Large ribosomal subunit protein uL22c (rpl22) of Oryza nivara (Indian wild rice).